The sequence spans 86 residues: Cell division protein ZapA (86 aa).

This sequence belongs to the ZapA family. Type 2 subfamily. As to quaternary structure, homodimer. Interacts with FtsZ.

Its subcellular location is the cytoplasm. Its function is as follows. Activator of cell division through the inhibition of FtsZ GTPase activity, therefore promoting FtsZ assembly into bundles of protofilaments necessary for the formation of the division Z ring. It is recruited early at mid-cell but it is not essential for cell division. The sequence is that of Cell division protein ZapA from Oceanobacillus iheyensis (strain DSM 14371 / CIP 107618 / JCM 11309 / KCTC 3954 / HTE831).